The following is a 1176-amino-acid chain: Growth-differentiation transition protein 5 (1176 aa).

Positions Met-1–Ala-25 are cleaved as a signal peptide. Residues Asp-26–Asn-913 lie on the Extracellular side of the membrane. A helical membrane pass occupies residues Leu-914–Gly-934. Residues Arg-935 to Phe-1176 lie on the Cytoplasmic side of the membrane. Low complexity-rich tracts occupy residues Ser-965–Ile-974 and Pro-1053–Ser-1066. Disordered regions lie at residues Ser-965 to Glu-985 and Val-1050 to Thr-1080. Positions Ser-1067–Pro-1078 are enriched in pro residues.

It belongs to the GDT family.

It localises to the membrane. In Dictyostelium discoideum (Social amoeba), this protein is Growth-differentiation transition protein 5 (gdt5).